We begin with the raw amino-acid sequence, 122 residues long: Large ribosomal subunit protein uL14 (122 aa).

Belongs to the universal ribosomal protein uL14 family. In terms of assembly, part of the 50S ribosomal subunit. Forms a cluster with proteins L3 and L19. In the 70S ribosome, L14 and L19 interact and together make contacts with the 16S rRNA in bridges B5 and B8.

Binds to 23S rRNA. Forms part of two intersubunit bridges in the 70S ribosome. This is Large ribosomal subunit protein uL14 from Chloroflexus aggregans (strain MD-66 / DSM 9485).